The following is a 596-amino-acid chain: DNA mismatch repair protein MutL (596 aa).

Belongs to the DNA mismatch repair MutL/HexB family.

This protein is involved in the repair of mismatches in DNA. It is required for dam-dependent methyl-directed DNA mismatch repair. May act as a 'molecular matchmaker', a protein that promotes the formation of a stable complex between two or more DNA-binding proteins in an ATP-dependent manner without itself being part of a final effector complex. In Leptospira borgpetersenii serovar Hardjo-bovis (strain L550), this protein is DNA mismatch repair protein MutL.